The chain runs to 109 residues: Flagellar hook-basal body complex protein FliE (109 aa).

This sequence belongs to the FliE family.

It localises to the bacterial flagellum basal body. The protein is Flagellar hook-basal body complex protein FliE of Pseudomonas fluorescens (strain SBW25).